Here is a 284-residue protein sequence, read N- to C-terminus: MIGTQSILPPGFGPGSHGEEDRLDYLPMPREMHTFERPSLPEPEQLDSHPIALALLERLQEALTAYRIGEQSRVIGLDRQPKADLKLLQQILGEGEVAIQVGGQRPVRIQETVLAGVWWVQLQVGLGEVVGQWLEVADIPALVRRRAFAEARWPRLGATLPDDLLNAGPVLVELLEAAKQHAEHASATPHVINLSLLPFSAEDQRFLAEQLGEGPVTVLSRGYGNCRIASTATPGIWRVQYFNSTDRLILDTLEVTAIPQAACAAQEDIDDSAERLREIREALE.

Residues 1–23 (MIGTQSILPPGFGPGSHGEEDRL) form a disordered region.

The protein belongs to the HupH/HyaF family.

This Azotobacter chroococcum mcd 1 protein is Hydrogenase expression/formation protein HupQ (hupQ).